The primary structure comprises 649 residues: Vitamin K-dependent protein S (649 aa).

The propeptide occupies 1–14 (SKQQASQVLVRKRR). Positions 15–60 (ANSMLEETKQGNLERECIEELCNKEEAREVFENDPETDYFYPKYLV) constitute a Gla domain. 4-carboxyglutamate is present on residues Glu-20, Glu-21, Glu-28, Glu-30, Glu-33, Glu-34, Glu-39, Glu-40, Glu-43, Glu-46, and Glu-50. The cysteines at positions 31 and 36 are disulfide-linked. Residues 61–89 (CLRSFQSGLFTAARQSTDAYPDLRSCVNA) are thrombin-sensitive. An EGF-like 1 domain is found at 90–128 (IPDQCSPLPCNEDGYMSCKDGKASFTCTCKPGWQGERCE). Intrachain disulfides connect Cys-94-Cys-107, Cys-99-Cys-116, Cys-118-Cys-127, Cys-134-Cys-148, Cys-144-Cys-157, Cys-159-Cys-172, Cys-178-Cys-190, Cys-185-Cys-199, Cys-201-Cys-214, Cys-220-Cys-229, Cys-225-Cys-238, Cys-240-Cys-255, and Cys-422-Cys-448. Position 109 is a (3R)-3-hydroxyaspartate (Asp-109). Residues 130 to 173 (DINECKDPSNINGGCSQICDNTPGSYHCSCKSGFVMLSNKKDCK) enclose the EGF-like 2; calcium-binding domain. The EGF-like 3; calcium-binding domain maps to 174–215 (DVDECSLKPNMCGTAVCKNIPGDFECECPEGYRYNLKSKSCE). Residues 216–256 (DVDECSENMCAQLCVNYPGGYTCYCDGKKGFKLAQDQKSCE) enclose the EGF-like 4; calcium-binding domain. Laminin G-like domains are found at residues 272 to 448 (LLYL…NKHC) and 457 to 639 (YYPG…AHSC). Asn-472, Asn-482, and Asn-503 each carry an N-linked (GlcNAc...) asparagine glycan. An intrachain disulfide couples Cys-612 to Cys-639.

The iron and 2-oxoglutarate dependent 3-hydroxylation of aspartate and asparagine is (R) stereospecific within EGF domains. As to expression, plasma.

The protein localises to the secreted. Anticoagulant plasma protein; it is a cofactor to activated protein C in the degradation of coagulation factors Va and VIIIa. It helps to prevent coagulation and stimulating fibrinolysis. The protein is Vitamin K-dependent protein S (PROS1) of Macaca mulatta (Rhesus macaque).